A 755-amino-acid polypeptide reads, in one-letter code: MKKQRKILWRKGIHLAFSEKWNTGFGGFKKFYFHQHLCILKAKLGRPITRNRQLRHFQGGKKALQIQKTWVKDEPPCAKTKFSVDTPHASTLSSPVKRKDTKHFVSSSRTLLRLQAEKLLSSAKNSDHEYCREKNLLKTVTDFPSNSALGQANGHRPRTDPQASDFPMKFNGESQSPGESGAIVITLSNHKRKGFCYGCCRGPEHHRNGGPLIPKQFQLNRHRRIKLSPLMMYEKLSMIRFRYRILRSQHFRTKSKVCKLRKAQRSWVQKVTGDHQETLRENGEGGSGSPFPSPEPKDPSCRQQPYFPDMDSNAVVKGTNSHVPDGHTKGSPFLGKELSLDEAFPDQQNGSATHAWDQSSCASPKWECTELIHDIPLPEHHSNTMFVSETEKEIATLGQENRTSSLSDDGVKLSVSGADTSVSSVDGPVSQKAVHSENSYQMEEDGSLKQNILSSELLDHPYCKSPLEAPLVCSGLKLENQVGGGKDSQKASPVDDEQLSVCLSGFLDEVMKKYGSLVPLSEKEVLGRLKDVFNEDFSNRKPFINREITNYRARHQKCNFRIFYNKHMLDMDDLATLDGQNWLNDQVINMYGELIMDAVPDKVHFFNSFFHRQLVTKGYNGVKRWTKKVDLFKKSLLLIPIHLEVHWSLITVTLSNRIISFYDSQGIHFKFCVENIRKYLLTEAREKNRPEFLQGWQTAVTKCIPQQKNDSDCGVFVLQYCKCLALEQPFQFSQEDMPRVRKRIYKELCECRLMD.

The segment at 269–329 (QKVTGDHQET…NSHVPDGHTK (61 aa)) is disordered. Over residues 272 to 283 (TGDHQETLRENG) the composition is skewed to basic and acidic residues. A protease region spans residues 563–724 (FYNKHMLDMD…VFVLQYCKCL (162 aa)). Residues histidine 646, aspartate 663, and cysteine 713 contribute to the active site.

It belongs to the peptidase C48 family. Interacts with CCAR2.

It is found in the nucleus. Its subcellular location is the nucleolus. Functionally, protease that catalyzes two essential functions in the SUMO pathway: processing of full-length SUMO3 to its mature form and deconjugation of SUMO2 and SUMO3 from targeted proteins. Has weak proteolytic activity against full-length SUMO1 or SUMO1 conjugates. Required for cell division. This is Sentrin-specific protease 5 (SENP5) from Macaca fascicularis (Crab-eating macaque).